The primary structure comprises 345 residues: Phosphate acyltransferase (345 aa).

The protein belongs to the PlsX family. Homodimer. Probably interacts with PlsY.

The protein resides in the cytoplasm. The catalysed reaction is a fatty acyl-[ACP] + phosphate = an acyl phosphate + holo-[ACP]. It participates in lipid metabolism; phospholipid metabolism. In terms of biological role, catalyzes the reversible formation of acyl-phosphate (acyl-PO(4)) from acyl-[acyl-carrier-protein] (acyl-ACP). This enzyme utilizes acyl-ACP as fatty acyl donor, but not acyl-CoA. In Levilactobacillus brevis (strain ATCC 367 / BCRC 12310 / CIP 105137 / JCM 1170 / LMG 11437 / NCIMB 947 / NCTC 947) (Lactobacillus brevis), this protein is Phosphate acyltransferase.